A 473-amino-acid polypeptide reads, in one-letter code: Dolichyl-diphosphooligosaccharide--protein glycosyltransferase subunit 1B (473 aa).

Residues 1-27 (MAPSLSTAVSSLLLLLLLAAAISVSSS) form the signal peptide. The Lumenal portion of the chain corresponds to 28–439 (PPMPEDSIRV…PFQVYYEFNP (412 aa)). N-linked (GlcNAc...) asparagine glycans are attached at residues N307 and N361. The chain crosses the membrane as a helical span at residues 440-460 (IFMLAEPLMLISAVFLFFVAC). At 461 to 473 (IAYLHMDLSIGKS) the chain is on the cytoplasmic side.

This sequence belongs to the OST1 family. As to quaternary structure, component of the oligosaccharyltransferase (OST) complex.

Its subcellular location is the endoplasmic reticulum membrane. The protein operates within protein modification; protein glycosylation. Its function is as follows. Subunit of the oligosaccharyl transferase (OST) complex that catalyzes the initial transfer of a defined glycan (Glc(3)Man(9)GlcNAc(2) in eukaryotes) from the lipid carrier dolichol-pyrophosphate to an asparagine residue within an Asn-X-Ser/Thr consensus motif in nascent polypeptide chains, the first step in protein N-glycosylation. N-glycosylation occurs cotranslationally and the complex associates with the Sec61 complex at the channel-forming translocon complex that mediates protein translocation across the endoplasmic reticulum (ER). All subunits are required for a maximal enzyme activity. This chain is Dolichyl-diphosphooligosaccharide--protein glycosyltransferase subunit 1B (OST1B), found in Oryza sativa subsp. japonica (Rice).